The chain runs to 416 residues: CinA-like protein (416 aa).

Belongs to the CinA family.

This Amoebophilus asiaticus (strain 5a2) protein is CinA-like protein.